Consider the following 182-residue polypeptide: Plasmolipin (182 aa).

Residues 1-35 lie on the Cytoplasmic side of the membrane; sequence MAEFPSKVSTRTSSPAQGAEASVSALRPDLGFVRS. At S9 the chain carries Phosphoserine. Residues 32 to 166 enclose the MARVEL domain; sequence FVRSRLGALM…SAFFSYQAWR (135 aa). The helical transmembrane segment at 36–56 threads the bilayer; it reads RLGALMLLQLVLGLLVWALIA. Topologically, residues 57–68 are extracellular; it reads DTPYHLYPAYGW. The helical transmembrane segment at 69–89 threads the bilayer; that stretch reads VMFVAVFLWLVTIVLFNLYLF. Over 90-99 the chain is Cytoplasmic; it reads QLHMKLYMVP. Residues 100 to 120 form a helical membrane-spanning segment; sequence WPLVLMIFNISATVLYITAFI. Residues 121-141 lie on the Extracellular side of the membrane; that stretch reads ACSAAVDLTSLRGTRPYNQRA. Residues 142 to 162 form a helical membrane-spanning segment; sequence AASFFACLVMIAYGVSAFFSY. The Cytoplasmic portion of the chain corresponds to 163–182; that stretch reads QAWRGVGSNAATSQMAGGYA.

It belongs to the MAL family. As to quaternary structure, forms oligomers. Post-translationally, phosphorylated.

The protein resides in the cell membrane. The protein localises to the myelin membrane. It is found in the apical cell membrane. Its subcellular location is the golgi apparatus. Functionally, main component of the myelin sheath that plays an important role in myelin membrane biogenesis and myelination. Plays an essential function in apical endocytosis. Regulates epithelial development through the regulation of apical endocytosis. Part of the intracellular machinery that mediates basolateral-to-apical transport of ICAM-1, an essential adhesion receptor in epithelial cells, from the subapical compartment in hepatic epithelial cells. The sequence is that of Plasmolipin from Homo sapiens (Human).